The chain runs to 156 residues: Arginine repressor (156 aa).

It belongs to the ArgR family.

It is found in the cytoplasm. It functions in the pathway amino-acid biosynthesis; L-arginine biosynthesis [regulation]. Regulates arginine biosynthesis genes. This chain is Arginine repressor, found in Vibrio campbellii (strain ATCC BAA-1116).